We begin with the raw amino-acid sequence, 408 residues long: uncharacterized protein (408 aa).

8 consecutive 4Fe-4S ferredoxin-type domains span residues 42-72 (IPPI…MIYN), 78-107 (KLPV…MDKH), 122-151 (SNLI…RKEG), 151-181 (GKYV…VVDE), 212-241 (KIPH…NEKK), 233-265 (GEID…IYKP), 273-302 (ICYV…ISKE), and 304-333 (KLPY…VVKP). Residues Cys-52, Cys-55, Cys-58, Cys-62, Cys-87, Cys-90, Cys-93, Cys-97, Cys-131, Cys-134, Cys-137, Cys-141, Cys-160, Cys-163, Cys-166, and Cys-170 each contribute to the [4Fe-4S] cluster site. [4Fe-4S] cluster-binding residues include Cys-282, Cys-285, Cys-288, and Cys-292.

This is an uncharacterized protein from Methanocaldococcus jannaschii (strain ATCC 43067 / DSM 2661 / JAL-1 / JCM 10045 / NBRC 100440) (Methanococcus jannaschii).